The sequence spans 134 residues: Rubredoxin-2 (134 aa).

The Rubredoxin-like domain maps to 1–53 (MAKYQCPDCQYIYDECKGEPHEGFQPNTNWGEIPEEWACPDCAVRDKIDFKML). The Fe cation site is built by Cys6, Cys9, Cys39, and Cys42. The span at 99 to 116 (SITDERENTPDNKVERRS) shows a compositional bias: basic and acidic residues. A disordered region spans residues 99 to 134 (SITDERENTPDNKVERRSQSQAVRRSSVKKIKNNKR). Basic residues predominate over residues 124–134 (SSVKKIKNNKR).

The protein belongs to the rubredoxin family. Requires Fe(3+) as cofactor.

It is found in the cytoplasm. Its pathway is hydrocarbon metabolism; alkane degradation. In terms of biological role, involved in the hydrocarbon hydroxylating system, which transfers electrons from NADH to rubredoxin reductase and then through rubredoxin to alkane 1 monooxygenase. The chain is Rubredoxin-2 (alkF) from Pseudomonas putida (Arthrobacter siderocapsulatus).